A 419-amino-acid polypeptide reads, in one-letter code: Elongation factor Tu, chloroplastic (419 aa).

The tr-type G domain maps to 10–214 (KPHVNIGTIG…KVDEYIPTPD (205 aa)). Residues 19–26 (GHVDHGKT) are G1. 19-26 (GHVDHGKT) is a GTP binding site. A Mg(2+)-binding site is contributed by threonine 26. The interval 60–64 (GITIN) is G2. Residues 81-84 (DCPG) form a G3 region. Residues 81–85 (DCPGH) and 136–139 (NKED) contribute to the GTP site. Residues 136 to 139 (NKED) form a G4 region. Residues 174 to 176 (SAL) are G5.

It belongs to the TRAFAC class translation factor GTPase superfamily. Classic translation factor GTPase family. EF-Tu/EF-1A subfamily.

The protein resides in the plastid. Its subcellular location is the chloroplast. It catalyses the reaction GTP + H2O = GDP + phosphate + H(+). GTP hydrolase that promotes the GTP-dependent binding of aminoacyl-tRNA to the A-site of ribosomes during protein biosynthesis. The sequence is that of Elongation factor Tu, chloroplastic (tufA) from Tetradesmus obliquus (Green alga).